Reading from the N-terminus, the 317-residue chain is 2-oxoglutarate and iron-dependent oxygenase domain-containing protein 3 (317 aa).

The interval 1–34 (MATRHRRRGGSAPSWAKPGKPGERPGGPKKSRGR) is disordered. At 1–39 (MATRHRRRGGSAPSWAKPGKPGERPGGPKKSRGRTSWKS) the chain is on the cytoplasmic side. Residues 40 to 60 (LLIWGVFGVTLGLMAGYYLWG) traverse the membrane as a helical; Signal-anchor for type II membrane protein segment. Over 61-317 (ELITDDSVTE…EHAIGDPTWT (257 aa)) the chain is Lumenal. N-linked (GlcNAc...) asparagine glycans are attached at residues asparagine 195 and asparagine 213. Residues 205–307 (KPTFFSRMNS…AITISFTCNP (103 aa)) form the Fe2OG dioxygenase domain. Positions 228 and 230 each coordinate Fe cation. Asparagine 265 carries N-linked (GlcNAc...) asparagine glycosylation. Histidine 286 lines the Fe cation pocket. Arginine 296 is a catalytic residue. A 2-oxoglutarate-binding site is contributed by arginine 296.

This sequence belongs to the OGFOD3 family. Requires Fe(2+) as cofactor. It depends on L-ascorbate as a cofactor.

The protein localises to the membrane. The chain is 2-oxoglutarate and iron-dependent oxygenase domain-containing protein 3 (ogfod3) from Xenopus tropicalis (Western clawed frog).